The chain runs to 869 residues: TATA box-binding protein-associated factor RNA polymerase I subunit C (869 aa).

Disordered stretches follow at residues 605–629 and 729–869; these read SSLRRDAGPPGDTQPDCHAPTASWT and GAAW…RMGF. A Phosphothreonine modification is found at Thr834. Over residues 835-860 the composition is skewed to polar residues; the sequence is PPHSQASSVRATRSQQHTPVLSSSQP. Phosphoserine is present on Ser848.

Component of the transcription factor SL1/TIF-IB complex, composed of TBP and at least TAF1A, TAF1B, TAF1C and TAF1D. In the complex interacts directly with TBP, TAF1A and TAF1B. Interaction of the SL1/TIF-IB subunits with TBP excludes interaction of TBP with the transcription factor IID (TFIID) subunits. Interacts with MYC and RRN3. Interacts with p53/TP53; the interaction prevents the association of SL1/TIF-IB with UBTF and represses RNA polymerase I transcription. Part of Pol I pre-initiation complex (PIC), in which Pol I core assembles with RRN3 and promoter-bound UTBF and SL1/TIF-IB complex.

The protein resides in the nucleus. Its subcellular location is the nucleolus. Component of the transcription factor SL1/TIF-IB complex, which is involved in the assembly of the PIC (pre-initiation complex) during RNA polymerase I-dependent transcription. The rate of PIC formation probably is primarily dependent on the rate of association of SL1/TIF-IB with the rDNA promoter. SL1/TIF-IB is involved in stabilization of nucleolar transcription factor 1/UBTF on rDNA. Formation of SL1/TIF-IB excludes the association of TBP with TFIID subunits. Recruits RNA polymerase I to the rRNA gene promoter via interaction with RRN3. The sequence is that of TATA box-binding protein-associated factor RNA polymerase I subunit C (TAF1C) from Homo sapiens (Human).